We begin with the raw amino-acid sequence, 517 residues long: MGTSAKMQKYDRQVRLWKAEGQNAIEKSHVCLLYANTVGCEALKNLILPGIGSFAVVDDTSVDFSMDGMNFFIQYDQEGKSRARCTASLLQQLNPNVEMEYLEMSPEALIDKNIEYFSKFSVVLSSNLKEKPLFRLEEYLRSHKIPLLHFNSVGFAGILRISTHEYTTTQSQPELPQDLRLKNPWPELINYVKSMDLDNMDSSSLSEIPYIVLIIHVLLKVSPAHAQNSQEADDCAMFRKIMEEYKGKCDSENIEEASSNSWKAFKEYKLPSNVYEVLHDTRCVKIQEDSESFWIMAHCLKMFYDETEFLPLSGLLPDMNCSTQQYVKLQVIYKEKSENDILKFKKYVQQTLKRLNRSVEEITDLEIKHFSRNCLNIKVMDFKTMKEEYQPTSNSVLESSSIDSNSLLPWYLAFRIYDTILEKHGKNYKEAFSDTTKTISVAQSFLSQIGLEKFFDVVYTAIQELERADGHELHSISSFIGGIVAQETIKLLAQQYLPLNNTFVFDGVHSRTETFKL.

This sequence belongs to the ubiquitin-activating E1 family. ULA1 subfamily. As to quaternary structure, heterodimer of uba3 and ula1. The complex binds NEDD8/ubl1 and ubc12.

It is found in the cytoplasm. The protein localises to the nucleus. It participates in protein modification; protein neddylation. In terms of biological role, regulatory subunit of the dimeric uba3-ula1 E1 enzyme. E1 activates NEDD8/ubl1 by first adenylating its C-terminal glycine residue with ATP, thereafter linking this residue to the side chain of the catalytic cysteine, yielding a NEDD8-UBA3 thioester and free AMP. E1 finally transfers NEDD8 to the catalytic cysteine of ubc12. In Schizosaccharomyces pombe (strain 972 / ATCC 24843) (Fission yeast), this protein is NEDD8-activating enzyme E1 regulatory subunit (uba5).